A 494-amino-acid chain; its full sequence is Probable malate:quinone oxidoreductase (494 aa).

It belongs to the MQO family. It depends on FAD as a cofactor.

It catalyses the reaction (S)-malate + a quinone = a quinol + oxaloacetate. It participates in carbohydrate metabolism; tricarboxylic acid cycle; oxaloacetate from (S)-malate (quinone route): step 1/1. This Helicobacter hepaticus (strain ATCC 51449 / 3B1) protein is Probable malate:quinone oxidoreductase.